Here is a 482-residue protein sequence, read N- to C-terminus: GTPase Obg (482 aa).

The Obg domain maps to proline 2–valine 159. In terms of domain architecture, OBG-type G spans alanine 160 to valine 340. Residues glycine 166 to serine 173, phenylalanine 191 to valine 195, aspartate 212 to glycine 215, asparagine 292 to aspartate 295, and serine 321 to leucine 323 each bind GTP. The Mg(2+) site is built by serine 173 and threonine 193. The region spanning proline 358 to proline 438 is the OCT domain. A disordered region spans residues proline 441–glutamate 482. Positions threonine 453 to arginine 469 are enriched in basic and acidic residues.

Belongs to the TRAFAC class OBG-HflX-like GTPase superfamily. OBG GTPase family. In terms of assembly, monomer. Mg(2+) serves as cofactor.

The protein localises to the cytoplasm. In terms of biological role, an essential GTPase which binds GTP, GDP and possibly (p)ppGpp with moderate affinity, with high nucleotide exchange rates and a fairly low GTP hydrolysis rate. Plays a role in control of the cell cycle, stress response, ribosome biogenesis and in those bacteria that undergo differentiation, in morphogenesis control. This Mycobacteroides abscessus (strain ATCC 19977 / DSM 44196 / CCUG 20993 / CIP 104536 / JCM 13569 / NCTC 13031 / TMC 1543 / L948) (Mycobacterium abscessus) protein is GTPase Obg.